Consider the following 201-residue polypeptide: Probable GTP-binding protein EngB (201 aa).

Residues 22–195 (TQPEFAFAGK…WRCIEQFLEV (174 aa)) form the EngB-type G domain. GTP-binding positions include 30–37 (GKSNVGKS), 57–61 (GKTQT), 75–78 (DLPG), 142–145 (TKLD), and 174–176 (FSS). Mg(2+)-binding residues include Ser37 and Thr59.

This sequence belongs to the TRAFAC class TrmE-Era-EngA-EngB-Septin-like GTPase superfamily. EngB GTPase family. The cofactor is Mg(2+).

Its function is as follows. Necessary for normal cell division and for the maintenance of normal septation. The polypeptide is Probable GTP-binding protein EngB (Lachnoclostridium phytofermentans (strain ATCC 700394 / DSM 18823 / ISDg) (Clostridium phytofermentans)).